We begin with the raw amino-acid sequence, 277 residues long: MAIKSYKPYTPSRRYMTGLSSEDITAKPSVRSLLVKLPATGGRNNNGRITSRHKEAGAKKLYRIIDFKRRKFGIEGKVEAIEYDPNRNCRIALIAYKDGEKRYIIRPNGLNVGDVIASIDEGSLDIKPGNAMKLRFIPVGTIVHNVELKPGKGAQIARSAGGYAQLMGKEEKYVILRMPSGEMRQVLAECMASIGVVGNEDWANITIGKAGRNRYRGIRPQTRGSAMNPVDHPHGGGEGKKNSGRHPVTPWGKPTKGAKTRRKKASDKLIISRRKGK.

The interval 219 to 277 (RPQTRGSAMNPVDHPHGGGEGKKNSGRHPVTPWGKPTKGAKTRRKKASDKLIISRRKGK) is disordered. The span at 231 to 241 (DHPHGGGEGKK) shows a compositional bias: basic and acidic residues. Residues 256 to 277 (KGAKTRRKKASDKLIISRRKGK) are compositionally biased toward basic residues.

The protein belongs to the universal ribosomal protein uL2 family. As to quaternary structure, part of the 50S ribosomal subunit. Forms a bridge to the 30S subunit in the 70S ribosome.

In terms of biological role, one of the primary rRNA binding proteins. Required for association of the 30S and 50S subunits to form the 70S ribosome, for tRNA binding and peptide bond formation. It has been suggested to have peptidyltransferase activity; this is somewhat controversial. Makes several contacts with the 16S rRNA in the 70S ribosome. The chain is Large ribosomal subunit protein uL2 from Campylobacter concisus (strain 13826).